The primary structure comprises 221 residues: DNA repair and recombination protein RadB (221 aa).

It belongs to the eukaryotic RecA-like protein family. RadB subfamily.

Involved in DNA repair and in homologous recombination. May regulate the cleavage reactions of the branch-structured DNA. Has a very weak ATPase activity that is not stimulated by DNA. Binds DNA but does not promote DNA strands exchange. The protein is DNA repair and recombination protein RadB of Thermococcus gammatolerans (strain DSM 15229 / JCM 11827 / EJ3).